The following is a 448-amino-acid chain: UPF0210 protein Pars_1033 (448 aa).

It belongs to the UPF0210 family.

The protein is UPF0210 protein Pars_1033 of Pyrobaculum arsenaticum (strain DSM 13514 / JCM 11321 / PZ6).